The following is a 30-amino-acid chain: Cyclotide mela-5 (30 aa).

A cross-link (cyclopeptide (Gly-Asp)) is located at residues 1–30 (GSAIACGESCFKFKCYTPGCSCSYPICKKD). Cystine bridges form between C6–C20, C10–C22, and C15–C27.

In terms of processing, this is a cyclic peptide. Contains 3 disulfide bonds.

Its function is as follows. Probably participates in a plant defense mechanism (Potential). Binds to and induces leakage in phospholipd membranes, particularly ones containing 1-palmitoyl-2-oleophosphatidylethanolamine (POPE). This is Cyclotide mela-5 from Melicytus latifolius (Norfolk Island mahoe).